Consider the following 47-residue polypeptide: Wound-induced basic protein (47 aa).

A disordered region spans residues 1-47 (MIYDVNSPLFRSFLSQKGGSSDKRKTEEQKPKEHRPKASENKPIMTE). Positions 20–40 (SSDKRKTEEQKPKEHRPKASE) are enriched in basic and acidic residues.

Abundant in radicals and epicotyls of seedlings and higher in the roots than in stems and leaves of mature plants.

The polypeptide is Wound-induced basic protein (PR4) (Phaseolus vulgaris (Kidney bean)).